Consider the following 292-residue polypeptide: Malectin (292 aa).

The N-terminal stretch at 1–28 is a signal peptide; sequence MLGAWAVEGTAVALLRLLLLLLPPAIRG. Residues 29–269 are Lumenal-facing; it reads PGLGVAGVAG…TPNPYASDNS (241 aa). Positions 82, 104, 131, 132, and 201 each coordinate a carbohydrate. The tract at residues 221 to 265 is disordered; it reads LQPHPGLEKKEEEEEEEEYDEGSNLKKQTNKNRVQSGPRTPNPYA. Positions 231-241 are enriched in acidic residues; it reads EEEEEEEEYDE. The segment covering 245-265 has biased composition (polar residues); the sequence is LKKQTNKNRVQSGPRTPNPYA. The N-linked (GlcNAc...) asparagine glycan is linked to N268. The chain crosses the membrane as a helical span at residues 270–290; it reads SLMFPILVAFGVFIPTLFCLC. Residues 291 to 292 lie on the Cytoplasmic side of the membrane; that stretch reads RL.

This sequence belongs to the malectin family. Interacts with the oligosaccharyltransferase (OST) complex.

It localises to the endoplasmic reticulum membrane. Its function is as follows. Carbohydrate-binding protein with a strong ligand preference for Glc2-N-glycan. May play a role in the early steps of protein N-glycosylation. This Homo sapiens (Human) protein is Malectin.